The following is a 250-amino-acid chain: Doublesex- and mab-3-related transcription factor dmd-3 (250 aa).

Residues Cys19 to Arg68 constitute a DNA-binding region (DM 1). A compositionally biased stretch (polar residues) spans Cys90–Ser100. The segment at Cys90–Pro115 is disordered. The segment covering Gly102–Pro115 has biased composition (basic and acidic residues). Positions Cys117 to Arg164 form a DNA-binding region, DM 2. Positions Gln166–Ser201 are disordered. The span at Glu169–Pro180 shows a compositional bias: basic and acidic residues. Over residues Thr186–Ser201 the composition is skewed to low complexity.

The protein belongs to the DMRT family. In males, expressed in the tail tip. Specifically, expressed in 15 male-specific muscles of the tail tip called the diagonal muscles, and also in core body muscles of both males and hermaphrodites. In males, expressed in ray A-neurons. In males, expressed in PHC sensory neurons. In males, it is also expressed in the hindgut, B lineage and somatic gonad. In hermaphrodites, expressed in the anchor cell only.

It localises to the nucleus. Its subcellular location is the perikaryon. Functionally, transcriptional activator which promotes male-specific development. Acts partially redundantly with the transcription factor mab-3 to coordinate tail tip cell fusion and retraction and thereby regulate male tail tip morphogenesis. This is most likely through the regulation of downstream effectors such as eff-1. May also negatively regulate the expression of other proteins implicated in male tail morphogenesis including nhr-25, vav-1 and arl-1 in tail tip cells. In males, plays a role in the development of ray A-neurons by negatively regulating the activity of the transcription factor ast-1. Plays a role in the male-specific differentiation of PHC sensory neurons into densely connected hub sensory neurons. Plays a role in male mating behavior. In Caenorhabditis elegans, this protein is Doublesex- and mab-3-related transcription factor dmd-3.